A 172-amino-acid chain; its full sequence is Protein nemuri (172 aa).

Residues 1–25 (MSAKYTLIFALAALCCLVFSTEAAA) form the signal peptide. Residues 27 to 172 (RSRVLSSRRG…KRRSGKGNKA (146 aa)) form a disordered region. 3 stretches are compositionally biased toward basic and acidic residues: residues 35-50 (RGSE…KEDS), 58-90 (DLER…DKET), and 97-108 (TIVKPNKDDARA). The stretch at 45–74 (DNKEDSELAAQEQDLERQEQEEQNDRLEGR) forms a coiled coil. The segment covering 109-172 (RRIVRAGRRR…KRRSGKGNKA (64 aa)) has biased composition (basic residues).

Detected in the brain where it accumulates in the dorsal fan-shaped body following sleep deprivation (at protein level). Expressed in the adult body.

Its subcellular location is the secreted. Antimicrobial protein which is essential for the homeostatic regulation of sleep. Promotes sleep following sleep deprivation or bacterial infection and increases survival following bacterial infection. Likely to promote survival to bacterial infection in two ways; by contributing to the innate immune response and by promoting sleep during sickness to aid recovery. The sequence is that of Protein nemuri from Drosophila melanogaster (Fruit fly).